A 63-amino-acid chain; its full sequence is Large ribosomal subunit protein bL28 (63 aa).

It belongs to the bacterial ribosomal protein bL28 family.

This Dictyoglomus thermophilum (strain ATCC 35947 / DSM 3960 / H-6-12) protein is Large ribosomal subunit protein bL28.